A 556-amino-acid chain; its full sequence is MKTDVQIAQEAKMLPIMEVAKQIGLGEDDIELYGKYKAKISLDVYKRLADKPDGKLVLVTAINPTPAGEGKTTTNVGLSMGLNKIGKKTITALNEPSLGPCFGVKGGAAGGGYAQVVPMDDINLHFTGDIHAITTAHNLLAALMDNHIKQGNALGIDINKITWKRVLDMNDRALRDIVIGLGGTANGIPRQDGFDITVASEIMAIMCLATSLSDLKDRLSRMIVGYTSRRLAVTADSLTLRGALALLLKDALKPNLVQTLENTPAIIHGGPFANIAHGCNSVTTTKTALKIADYVVTEAGFGADLGAEKFFDIKCRFADLKPDVAVIVATVRALKNHGGVAKANLGAENMKALEDGFGNLERHIENVHKFGVPAVVAINAFPTDTEKELKFVEDACRKLGADVVLSEVWAKGGEGGVELAKKVVEVTEKGAAKFKPLYPAEMPLKQKIETIAKEIYRADGVEFSAKASKELDKFEKLGFGNLPICVAKTQYSFSDNPNLKGAPKGFTVSVSNARISAGAGFIVVLTGDIMTMPGLPKVPAANHMDVLESGEIVGLF.

Residue T65 to T72 coordinates ATP.

It belongs to the formate--tetrahydrofolate ligase family.

The catalysed reaction is (6S)-5,6,7,8-tetrahydrofolate + formate + ATP = (6R)-10-formyltetrahydrofolate + ADP + phosphate. It functions in the pathway one-carbon metabolism; tetrahydrofolate interconversion. The chain is Formate--tetrahydrofolate ligase from Peptoclostridium acidaminophilum (Eubacterium acidaminophilum).